Reading from the N-terminus, the 213-residue chain is Glycerol-3-phosphate acyltransferase (213 aa).

Helical transmembrane passes span 2 to 22, 54 to 74, 80 to 100, 110 to 130, 143 to 163, and 165 to 185; these read ITIVLLILAYLLGSIPSGLWI, MATFVIDFFKGTLATLLPIMF, SPLIFGLLAVIGHTFPIFAGF, AGVVFGFAPVFCLYLAVVFFG, VTASIAAVIGVLLFPLFGFIL, and NYDPLFIAIILALASLIIIRH.

Belongs to the PlsY family. Probably interacts with PlsX.

The protein resides in the cell membrane. It catalyses the reaction an acyl phosphate + sn-glycerol 3-phosphate = a 1-acyl-sn-glycero-3-phosphate + phosphate. It functions in the pathway lipid metabolism; phospholipid metabolism. Catalyzes the transfer of an acyl group from acyl-phosphate (acyl-PO(4)) to glycerol-3-phosphate (G3P) to form lysophosphatidic acid (LPA). This enzyme utilizes acyl-phosphate as fatty acyl donor, but not acyl-CoA or acyl-ACP. The protein is Glycerol-3-phosphate acyltransferase of Streptococcus pneumoniae (strain Taiwan19F-14).